Here is a 131-residue protein sequence, read N- to C-terminus: uncharacterized protein (131 aa).

A disordered region spans residues 15 to 43 (QLQAEHGSAPSNIASGPSSNQQQQEVQDE). Residues 23-34 (APSNIASGPSSN) show a composition bias toward polar residues.

It belongs to the PDCD5 family.

This is an uncharacterized protein from Schizosaccharomyces pombe (strain 972 / ATCC 24843) (Fission yeast).